We begin with the raw amino-acid sequence, 724 residues long: Acyl-coenzyme A oxidase 2 (724 aa).

Residues 1-48 are disordered; sequence MAMLSQPNDGHDHPEKKDPDTTPKQVAGVISSQDPPHPAKDVAEERAR. Basic and acidic residues-rich tracts occupy residues 9–21 and 37–48; these read DGHD…DPDT and HPAKDVAEERAR.

Belongs to the acyl-CoA oxidase family. The cofactor is FAD.

It localises to the peroxisome. The catalysed reaction is a 2,3-saturated acyl-CoA + O2 = a (2E)-enoyl-CoA + H2O2. Its pathway is lipid metabolism; peroxisomal fatty acid beta-oxidation. The protein is Acyl-coenzyme A oxidase 2 (POX2) of Candida tropicalis (Yeast).